We begin with the raw amino-acid sequence, 423 residues long: Gamma-glutamyl phosphate reductase (423 aa).

It belongs to the gamma-glutamyl phosphate reductase family.

It is found in the cytoplasm. It carries out the reaction L-glutamate 5-semialdehyde + phosphate + NADP(+) = L-glutamyl 5-phosphate + NADPH + H(+). It functions in the pathway amino-acid biosynthesis; L-proline biosynthesis; L-glutamate 5-semialdehyde from L-glutamate: step 2/2. Its function is as follows. Catalyzes the NADPH-dependent reduction of L-glutamate 5-phosphate into L-glutamate 5-semialdehyde and phosphate. The product spontaneously undergoes cyclization to form 1-pyrroline-5-carboxylate. The protein is Gamma-glutamyl phosphate reductase of Roseiflexus castenholzii (strain DSM 13941 / HLO8).